The sequence spans 122 residues: Large ribosomal subunit protein uL14 (122 aa).

It belongs to the universal ribosomal protein uL14 family. Part of the 50S ribosomal subunit. Forms a cluster with proteins L3 and L19. In the 70S ribosome, L14 and L19 interact and together make contacts with the 16S rRNA in bridges B5 and B8.

Binds to 23S rRNA. Forms part of two intersubunit bridges in the 70S ribosome. The protein is Large ribosomal subunit protein uL14 of Thermotoga maritima (strain ATCC 43589 / DSM 3109 / JCM 10099 / NBRC 100826 / MSB8).